Reading from the N-terminus, the 426-residue chain is Serine/threonine-protein kinase ssn3 (426 aa).

The 330-residue stretch at 39 to 368 (YHIVGFISSG…AKEALEHPYF (330 aa)) folds into the Protein kinase domain. Residues 45–53 (ISSGTYGRV) and Lys69 each bind ATP. The active-site Proton acceptor is Asp171. Basic and acidic residues predominate over residues 389–398 (RRITHDDNDI). The tract at residues 389–426 (RRITHDDNDIRSGSLPGTKRSGLPDDSLMSRAAKRMKE) is disordered.

This sequence belongs to the protein kinase superfamily. CMGC Ser/Thr protein kinase family. CDC2/CDKX subfamily. In terms of assembly, component of the srb8-11 complex, a regulatory module of the Mediator complex. The cofactor is Mg(2+).

The protein resides in the nucleus. It carries out the reaction L-seryl-[protein] + ATP = O-phospho-L-seryl-[protein] + ADP + H(+). It catalyses the reaction L-threonyl-[protein] + ATP = O-phospho-L-threonyl-[protein] + ADP + H(+). The catalysed reaction is [DNA-directed RNA polymerase] + ATP = phospho-[DNA-directed RNA polymerase] + ADP + H(+). Functionally, component of the srb8-11 complex. The srb8-11 complex is a regulatory module of the Mediator complex which is itself involved in regulation of basal and activated RNA polymerase II-dependent transcription. The srb8-11 complex may be involved in the transcriptional repression of a subset of genes regulated by Mediator. It may inhibit the association of the Mediator complex with RNA polymerase II to form the holoenzyme complex. The srb8-11 complex phosphorylates the C-terminal domain (CTD) of the largest subunit of RNA polymerase II. The protein is Serine/threonine-protein kinase ssn3 (ssn3) of Emericella nidulans (strain FGSC A4 / ATCC 38163 / CBS 112.46 / NRRL 194 / M139) (Aspergillus nidulans).